The following is a 180-amino-acid chain: UPF0743 protein C215.06c (180 aa).

2 consecutive C2HC LYAR-type zinc fingers follow at residues 1–26 (MVSF…SRCH) and 27–51 (GAYF…TSCM). Residues Cys-6, Cys-9, His-21, Cys-25, Cys-32, Cys-35, His-47, and Cys-50 each coordinate Zn(2+). Residues 61-125 (LYRPTKKELK…KETVSSPAEQ (65 aa)) are disordered. Residues 77-95 (NAVNSKELSPNTDNQNTPA) show a composition bias toward polar residues. The residue at position 85 (Ser-85) is a Phosphoserine. The segment covering 100–111 (HSLDENEKDKEN) has biased composition (basic and acidic residues).

Belongs to the UPF0743 family.

The protein resides in the nucleus. The protein is UPF0743 protein C215.06c of Schizosaccharomyces pombe (strain 972 / ATCC 24843) (Fission yeast).